Reading from the N-terminus, the 586-residue chain is Cryptochrome-1 (586 aa).

Positions 3–132 constitute a Photolyase/cryptochrome alpha/beta domain; it reads VNAVHWFRKG…EVIVRISHTL (130 aa). K11 participates in a covalent cross-link: Glycyl lysine isopeptide (Lys-Gly) (interchain with G-Cter in ubiquitin). The short motif at 50 to 54 is the LIR 1 element; it reads NRWRF. Residue S71 is modified to Phosphoserine; by AMPK. Residues 82 to 87 carry the LIR 2 motif; it reads DVFPRL. K107 participates in a covalent cross-link: Glycyl lysine isopeptide (Lys-Gly) (interchain with G-Cter in ubiquitin). An LIR 3 motif is present at residues 151-156; that stretch reads KRFQTL. Residue K159 forms a Glycyl lysine isopeptide (Lys-Gly) (interchain with G-Cter in ubiquitin) linkage. S247 carries the post-translational modification Phosphoserine; by MAPK. Position 252 (S252) interacts with FAD. Short sequence motifs (LIR) lie at residues 255–260 and 271–276; these read LRFGCL and DLYKKV. A Phosphoserine; by AMPK modification is found at S280. The LIR 6 signature appears at 285–290; the sequence is SLYGQL. Q289 provides a ligand contact to FAD. A Glycyl lysine isopeptide (Lys-Gly) (interchain with G-Cter in ubiquitin) cross-link involves residue K329. The LIR 7 signature appears at 335 to 339; that stretch reads TGFPW. FAD is bound at residue H355. The segment at 371-470 is required for inhibition of CLOCK-BMAL1-mediated transcription; it reads WISWEEGMKV…LIGINYPKPM (100 aa). An LIR 8 motif is present at residues 379-384; that stretch reads KVFEEL. Residue 387-389 coordinates FAD; the sequence is DAD. 3 consecutive short sequence motifs (LIR) follow at residues 395–400, 411–416, and 430–435; these read GSWMWL, HCYCPV, and RRYLPV. The interaction with TIMELESS stretch occupies residues 471 to 493; sequence VNHAEASRLNIERMKQIYQQLSR. Residue K485 forms a Glycyl lysine isopeptide (Lys-Gly) (interchain with G-Cter in ubiquitin) linkage. 2 short sequence motifs (LIR) span residues 486 to 491 and 492 to 497; these read QIYQQL and SRYRGL. The span at 545 to 559 shows a compositional bias: polar residues; that stretch reads QQTHLLKQGRSSMGT. The disordered stretch occupies residues 545 to 586; it reads QQTHLLKQGRSSMGTGLSGGKRPSQEEDTQSIGPKVQRQSTN. K565 is covalently cross-linked (Glycyl lysine isopeptide (Lys-Gly) (interchain with G-Cter in ubiquitin)). A Phosphoserine modification is found at S568.

Belongs to the DNA photolyase class-1 family. As to quaternary structure, component of the circadian core oscillator, which includes the CRY proteins, CLOCK or NPAS2, BMAL1 or BMAL2, CSNK1D and/or CSNK1E, TIMELESS, and the PER proteins. Interacts directly with TIMELESS. Interacts directly with PER1, PER2 and PER3; interaction with PER2 inhibits its ubiquitination and vice versa. Interacts with FBXL21. Interacts with FBXL3. Interacts with CLOCK-BMAL1 independently of PER2 and DNA. Interacts with HDAC1, HDAC2 and SIN3B. Interacts with nuclear receptors AR, NR1D1, NR3C1/GR, RORA and RORC; the interaction with at least NR3C1/GR is ligand dependent. Interacts with PRKDC. Interacts with the G protein subunit alpha GNAS; the interaction may block GPCR-mediated regulation of cAMP concentrations. Interacts with PRMT5. Interacts with EZH2. Interacts with MYBBP1A, DOCK7, HNRNPU, RPL7A, RPL8 and RPS3. Interacts with PPP5C (via TPR repeats). Interacts with MAP1LC3B. Interacts with CLOCK. Interacts with BMAL1. Interacts weakly with HDAC3; this interaction is enhanced in the presence of FBXL3. Interacts with TRIM28, KCTD5 and DDB1. Interacts with FOXO1. Interacts with DTL and DDB1-CUL4A complex. Interacts with HNF4A. Interacts with PSMD2 in a KDM8-dependent manner. Interacts with KDM8 in a FBXL3-dependent manner. Interacts with PPARG in a ligand-dependent manner. Interacts with PPARD (via domain NR LBD) and NR1I2 (via domain NR LBD) in a ligand-dependent manner. Interacts with PPARA, NR1I3 and VDR. The cofactor is FAD. (6R)-5,10-methylene-5,6,7,8-tetrahydrofolate serves as cofactor. In terms of processing, phosphorylation on Ser-247 by MAPK is important for the inhibition of CLOCK-BMAL1-mediated transcriptional activity. Phosphorylation by CSNK1E requires interaction with PER1 or PER2. Phosphorylation at Ser-71 and Ser-280 by AMPK decreases protein stability. Phosphorylation at Ser-568 exhibits a robust circadian rhythm with a peak at CT8, increases protein stability, prevents SCF(FBXL3)-mediated degradation and is antagonized by interaction with PRKDC. Post-translationally, ubiquitinated by the SCF(FBXL3) and SCF(FBXL21) complexes, regulating the balance between degradation and stabilization. The SCF(FBXL3) complex is mainly nuclear and mediates ubiquitination and subsequent degradation of CRY1. In contrast, cytoplasmic SCF(FBXL21) complex-mediated ubiquitination leads to stabilize CRY1 and counteract the activity of the SCF(FBXL3) complex. The SCF(FBXL3) and SCF(FBXL21) complexes probably mediate ubiquitination at different Lys residues. Ubiquitination at Lys-11 and Lys-107 are specifically ubiquitinated by the SCF(FBXL21) complex but not by the SCF(FBXL3) complex. Ubiquitination may be inhibited by PER2. Deubiquitinated by USP7. Undergoes autophagy-mediated degradation in the liver in a time-dependent manner. Autophagic degradation of CRY1 (an inhibitor of gluconeogenesis) occurs during periods of reduced feeding allowing induction of gluconeogenesis and maintenance of blood glucose levels.

The protein localises to the cytoplasm. Its subcellular location is the nucleus. Functionally, transcriptional repressor which forms a core component of the circadian clock. The circadian clock, an internal time-keeping system, regulates various physiological processes through the generation of approximately 24 hour circadian rhythms in gene expression, which are translated into rhythms in metabolism and behavior. It is derived from the Latin roots 'circa' (about) and 'diem' (day) and acts as an important regulator of a wide array of physiological functions including metabolism, sleep, body temperature, blood pressure, endocrine, immune, cardiovascular, and renal function. Consists of two major components: the central clock, residing in the suprachiasmatic nucleus (SCN) of the brain, and the peripheral clocks that are present in nearly every tissue and organ system. Both the central and peripheral clocks can be reset by environmental cues, also known as Zeitgebers (German for 'timegivers'). The predominant Zeitgeber for the central clock is light, which is sensed by retina and signals directly to the SCN. The central clock entrains the peripheral clocks through neuronal and hormonal signals, body temperature and feeding-related cues, aligning all clocks with the external light/dark cycle. Circadian rhythms allow an organism to achieve temporal homeostasis with its environment at the molecular level by regulating gene expression to create a peak of protein expression once every 24 hours to control when a particular physiological process is most active with respect to the solar day. Transcription and translation of core clock components (CLOCK, NPAS2, BMAL1, BMAL2, PER1, PER2, PER3, CRY1 and CRY2) plays a critical role in rhythm generation, whereas delays imposed by post-translational modifications (PTMs) are important for determining the period (tau) of the rhythms (tau refers to the period of a rhythm and is the length, in time, of one complete cycle). A diurnal rhythm is synchronized with the day/night cycle, while the ultradian and infradian rhythms have a period shorter and longer than 24 hours, respectively. Disruptions in the circadian rhythms contribute to the pathology of cardiovascular diseases, cancer, metabolic syndromes and aging. A transcription/translation feedback loop (TTFL) forms the core of the molecular circadian clock mechanism. Transcription factors, CLOCK or NPAS2 and BMAL1 or BMAL2, form the positive limb of the feedback loop, act in the form of a heterodimer and activate the transcription of core clock genes and clock-controlled genes (involved in key metabolic processes), harboring E-box elements (5'-CACGTG-3') within their promoters. The core clock genes: PER1/2/3 and CRY1/2 which are transcriptional repressors form the negative limb of the feedback loop and interact with the CLOCK|NPAS2-BMAL1|BMAL2 heterodimer inhibiting its activity and thereby negatively regulating their own expression. This heterodimer also activates nuclear receptors NR1D1/2 and RORA/B/G, which form a second feedback loop and which activate and repress BMAL1 transcription, respectively. CRY1 and CRY2 have redundant functions but also differential and selective contributions at least in defining the pace of the SCN circadian clock and its circadian transcriptional outputs. More potent transcriptional repressor in cerebellum and liver than CRY2, though more effective in lengthening the period of the SCN oscillator. On its side, CRY2 seems to play a critical role in tuning SCN circadian period by opposing the action of CRY1. With CRY2, is dispensable for circadian rhythm generation but necessary for the development of intercellular networks for rhythm synchrony. Capable of translocating circadian clock core proteins such as PER proteins to the nucleus. Interacts with CLOCK-BMAL1 independently of PER proteins and is found at CLOCK-BMAL1-bound sites, suggesting that CRY may act as a molecular gatekeeper to maintainCLOCK-BMAL1 in a poised and repressed state until the proper time for transcriptional activation. Represses the CLOCK-BMAL1 induced transcription of BHLHE40/DEC1, ATF4, MTA1, KLF10 and NAMPT. May repress circadian target genes expression in collaboration with HDAC1 and HDAC2 through histone deacetylation. Mediates the clock-control activation of ATR and modulates ATR-mediated DNA damage checkpoint. In liver, mediates circadian regulation of cAMP signaling and gluconeogenesis by binding to membrane-coupled G proteins and blocking glucagon-mediated increases in intracellular cAMP concentrations and CREB1 phosphorylation. Inhibits hepatic gluconeogenesis by decreasing nuclear FOXO1 levels that down-regulates gluconeogenic gene expression. Besides its role in the maintenance of the circadian clock, is also involved in the regulation of other processes. Represses glucocorticoid receptor NR3C1/GR-induced transcriptional activity by binding to glucocorticoid response elements (GREs). Plays a key role in glucose and lipid metabolism modulation, in part, through the transcriptional regulation of genes involved in these pathways, such as LEP or ACSL4. Represses PPARD and its target genes in the skeletal muscle and limits exercise capacity. Plays an essential role in the generation of circadian rhythms in the retina. Represses the transcriptional activity of NR1I2. In Macaca fascicularis (Crab-eating macaque), this protein is Cryptochrome-1 (CRY1).